Consider the following 783-residue polypeptide: Cilia- and flagella-associated protein 91 (783 aa).

Residues E748–D760 are compositionally biased toward acidic residues. The interval E748–G783 is disordered. Residues P764–P776 show a composition bias toward polar residues.

This sequence belongs to the CFAP91 family. In terms of assembly, part of a complex containing MYCBP, AKAP1 and PRKAR2B. Interacts with MYCBP and AKAP1. Interacts with CFAP61. In terms of processing, phosphorylated by PKA. Expressed in the testis, in cells involved in spermatogenesis.

The protein localises to the cytoplasm. It localises to the mitochondrion. The protein resides in the cytoskeleton. It is found in the cilium axoneme. Functionally, involved in sperm flagellum axonemal organization and function. May regulate cilium motility through its role in the assembly of the axonemal radial spokes. The sequence is that of Cilia- and flagella-associated protein 91 from Mus musculus (Mouse).